Consider the following 46-residue polypeptide: uncharacterized protein (46 aa).

A helical membrane pass occupies residues 20–42; the sequence is MAMIWVVAALVIALVVGTALNYI.

It is found in the membrane. This is an uncharacterized protein from Bacillus subtilis (strain 168).